Here is a 662-residue protein sequence, read N- to C-terminus: NADH-ubiquinone oxidoreductase chain 5 (662 aa).

Transmembrane regions (helical) follow at residues 40 to 62 (AALS…IVIG), 77 to 99 (LFDS…VHLY), 112 to 129 (RFFS…VLVA), 133 to 155 (YFIM…NFWY), 168 to 190 (LTVN…WVFG), 200 to 222 (VAPY…GAMA), 243 to 262 (VSAL…LMLR), 272 to 294 (TVLV…TGLL), 301 to 320 (VIAY…VGLS), 325 to 347 (ALFH…GAVI), 360 to 382 (GGLV…SLMA), 408 to 430 (TIAY…RLVS), 450 to 472 (APMI…GYIA), 510 to 529 (LLPA…LYHV), 609 to 631 (GVIT…LVFA), and 636 to 658 (VFNE…LPSS).

This sequence belongs to the complex I subunit 5 family.

The protein localises to the mitochondrion inner membrane. It catalyses the reaction a ubiquinone + NADH + 5 H(+)(in) = a ubiquinol + NAD(+) + 4 H(+)(out). In terms of biological role, core subunit of the mitochondrial membrane respiratory chain NADH dehydrogenase (Complex I) that is believed to belong to the minimal assembly required for catalysis. Complex I functions in the transfer of electrons from NADH to the respiratory chain. The immediate electron acceptor for the enzyme is believed to be ubiquinone. The chain is NADH-ubiquinone oxidoreductase chain 5 (ND5) from Cryptococcus neoformans var. grubii serotype A (strain H99 / ATCC 208821 / CBS 10515 / FGSC 9487) (Filobasidiella neoformans var. grubii).